The chain runs to 194 residues: Probable RNA 2'-phosphotransferase (194 aa).

This sequence belongs to the KptA/TPT1 family.

Functionally, removes the 2'-phosphate from RNA via an intermediate in which the phosphate is ADP-ribosylated by NAD followed by a presumed transesterification to release the RNA and generate ADP-ribose 1''-2''-cyclic phosphate (APPR&gt;P). May function as an ADP-ribosylase. The polypeptide is Probable RNA 2'-phosphotransferase (Escherichia coli O45:K1 (strain S88 / ExPEC)).